A 231-amino-acid chain; its full sequence is 7-cyano-7-deazaguanine synthase (231 aa).

8-18 is a binding site for ATP; sequence FSGGQDSTTCL. Zn(2+) contacts are provided by cysteine 188, cysteine 197, cysteine 200, and cysteine 203.

The protein belongs to the QueC family. Zn(2+) serves as cofactor.

The enzyme catalyses 7-carboxy-7-deazaguanine + NH4(+) + ATP = 7-cyano-7-deazaguanine + ADP + phosphate + H2O + H(+). It participates in purine metabolism; 7-cyano-7-deazaguanine biosynthesis. Its function is as follows. Catalyzes the ATP-dependent conversion of 7-carboxy-7-deazaguanine (CDG) to 7-cyano-7-deazaguanine (preQ(0)). The chain is 7-cyano-7-deazaguanine synthase from Shigella dysenteriae serotype 1 (strain Sd197).